Consider the following 115-residue polypeptide: T cell receptor beta variable 7-6 (115 aa).

Residues 1–21 (MGTSLLCWVVLGFLGTDHTGA) form the signal peptide. Positions 22-115 (GVSQSPRYKV…SAMYRCASSL (94 aa)) constitute an Ig-like domain. A disulfide bridge links Cys42 with Cys111.

Alpha-beta TR is a heterodimer composed of an alpha and beta chain; disulfide-linked. The alpha-beta TR is associated with the transmembrane signaling CD3 coreceptor proteins to form the TR-CD3 (TcR or TCR). The assembly of alpha-beta TR heterodimers with CD3 occurs in the endoplasmic reticulum where a single alpha-beta TR heterodimer associates with one CD3D-CD3E heterodimer, one CD3G-CD3E heterodimer and one CD247 homodimer forming a stable octameric structure. CD3D-CD3E and CD3G-CD3E heterodimers preferentially associate with TR alpha and TR beta chains, respectively. The association of the CD247 homodimer is the last step of TcR assembly in the endoplasmic reticulum and is required for transport to the cell surface.

It is found in the cell membrane. Functionally, v region of the variable domain of T cell receptor (TR) beta chain that participates in the antigen recognition. Alpha-beta T cell receptors are antigen specific receptors which are essential to the immune response and are present on the cell surface of T lymphocytes. Recognize peptide-major histocompatibility (MH) (pMH) complexes that are displayed by antigen presenting cells (APC), a prerequisite for efficient T cell adaptive immunity against pathogens. Binding of alpha-beta TR to pMH complex initiates TR-CD3 clustering on the cell surface and intracellular activation of LCK that phosphorylates the ITAM motifs of CD3G, CD3D, CD3E and CD247 enabling the recruitment of ZAP70. In turn ZAP70 phosphorylates LAT, which recruits numerous signaling molecules to form the LAT signalosome. The LAT signalosome propagates signal branching to three major signaling pathways, the calcium, the mitogen-activated protein kinase (MAPK) kinase and the nuclear factor NF-kappa-B (NF-kB) pathways, leading to the mobilization of transcription factors that are critical for gene expression and essential for T cell growth and differentiation. The T cell repertoire is generated in the thymus, by V-(D)-J rearrangement. This repertoire is then shaped by intrathymic selection events to generate a peripheral T cell pool of self-MH restricted, non-autoaggressive T cells. Post-thymic interaction of alpha-beta TR with the pMH complexes shapes TR structural and functional avidity. In Homo sapiens (Human), this protein is T cell receptor beta variable 7-6.